The sequence spans 166 residues: Succinate dehydrogenase [ubiquinone] cytochrome b small subunit, mitochondrial (166 aa).

Over 1-65 (MASVARSSAL…VPPPSPSHGS (65 aa)) the chain is Mitochondrial matrix. Residues 66 to 87 (YHWTFDRVVAAGLIPLTVAPFA) traverse the membrane as a helical segment. The Mitochondrial intermembrane segment spans residues 88–94 (AGSLNPT). A helical membrane pass occupies residues 95–115 (MDAVLAATILIHSHTGFGNII). Position 106 (His-106) interacts with heme. At 116 to 124 (VDYVPSKRV) the chain is on the mitochondrial matrix side. Position 118 (Tyr-118) interacts with a ubiquinone. Residues 125-149 (PKARKVFTWGLNAATVLVGLALYEF) traverse the membrane as a helical segment. The Mitochondrial intermembrane segment spans residues 150–166 (ETTDVGLTETIKRVWKA).

This sequence belongs to the CybS family. Forms part of complex II containing four subunits: a flavoprotein (FP), an iron-sulfur protein (IP) and a cytochrome b composed of a large and a small subunit.

Its subcellular location is the mitochondrion inner membrane. The protein operates within carbohydrate metabolism; tricarboxylic acid cycle. Its function is as follows. Membrane-anchoring subunit of succinate dehydrogenase (SDH) that is involved in complex II of the mitochondrial electron transport chain and is responsible for transferring electrons from succinate to ubiquinone (coenzyme Q). The polypeptide is Succinate dehydrogenase [ubiquinone] cytochrome b small subunit, mitochondrial (Neurospora crassa (strain ATCC 24698 / 74-OR23-1A / CBS 708.71 / DSM 1257 / FGSC 987)).